We begin with the raw amino-acid sequence, 296 residues long: ATP synthase gamma chain (296 aa).

Belongs to the ATPase gamma chain family. As to quaternary structure, F-type ATPases have 2 components, CF(1) - the catalytic core - and CF(0) - the membrane proton channel. CF(1) has five subunits: alpha(3), beta(3), gamma(1), delta(1), epsilon(1). CF(0) has three main subunits: a, b and c.

Its subcellular location is the cell inner membrane. Functionally, produces ATP from ADP in the presence of a proton gradient across the membrane. The gamma chain is believed to be important in regulating ATPase activity and the flow of protons through the CF(0) complex. The protein is ATP synthase gamma chain of Rhodopirellula baltica (strain DSM 10527 / NCIMB 13988 / SH1).